We begin with the raw amino-acid sequence, 164 residues long: Ferredoxin-type protein NapF (164 aa).

3 4Fe-4S ferredoxin-type domains span residues 28 to 57 (GDES…RGAG), 58 to 89 (GYPS…PRHT), and 132 to 161 (YQPQ…AEYL). 12 residues coordinate [4Fe-4S] cluster: Cys37, Cys40, Cys43, Cys47, Cys69, Cys72, Cys75, Cys79, Cys141, Cys144, Cys147, and Cys151.

Belongs to the NapF family. Interacts with the cytoplasmic NapA precursor. Requires [4Fe-4S] cluster as cofactor.

The protein resides in the cytoplasm. Functionally, could be involved in the maturation of NapA, the catalytic subunit of the periplasmic nitrate reductase, before its export into the periplasm. In Escherichia coli O157:H7, this protein is Ferredoxin-type protein NapF.